A 62-amino-acid chain; its full sequence is DNA gyrase inhibitor YacG (62 aa).

Zn(2+) is bound by residues C9, C12, C27, and C31. Basic and acidic residues predominate over residues 43–53; that stretch reads GYRIPGEKAPE. The tract at residues 43–62 is disordered; sequence GYRIPGEKAPESGDEEPGDE.

It belongs to the DNA gyrase inhibitor YacG family. In terms of assembly, interacts with GyrB. The cofactor is Zn(2+).

Inhibits all the catalytic activities of DNA gyrase by preventing its interaction with DNA. Acts by binding directly to the C-terminal domain of GyrB, which probably disrupts DNA binding by the gyrase. This is DNA gyrase inhibitor YacG from Citrifermentans bemidjiense (strain ATCC BAA-1014 / DSM 16622 / JCM 12645 / Bem) (Geobacter bemidjiensis).